Consider the following 391-residue polypeptide: Formate-dependent phosphoribosylglycinamide formyltransferase (391 aa).

N(1)-(5-phospho-beta-D-ribosyl)glycinamide contacts are provided by residues 18–19 and Glu-78; that span reads EL. Residues Arg-110, Lys-151, 156-161, 191-194, and Glu-199 each bind ATP; these read SSGKGQ and EEFI. The ATP-grasp domain occupies 115-305; the sequence is DLASKDLKIK…EFELHLRAFL (191 aa). Residues Glu-264 and Glu-276 each contribute to the Mg(2+) site. N(1)-(5-phospho-beta-D-ribosyl)glycinamide contacts are provided by residues Asp-283, Lys-353, and 360–361; that span reads RR.

The protein belongs to the PurK/PurT family. Homodimer.

It catalyses the reaction N(1)-(5-phospho-beta-D-ribosyl)glycinamide + formate + ATP = N(2)-formyl-N(1)-(5-phospho-beta-D-ribosyl)glycinamide + ADP + phosphate + H(+). The protein operates within purine metabolism; IMP biosynthesis via de novo pathway; N(2)-formyl-N(1)-(5-phospho-D-ribosyl)glycinamide from N(1)-(5-phospho-D-ribosyl)glycinamide (formate route): step 1/1. Its function is as follows. Involved in the de novo purine biosynthesis. Catalyzes the transfer of formate to 5-phospho-ribosyl-glycinamide (GAR), producing 5-phospho-ribosyl-N-formylglycinamide (FGAR). Formate is provided by PurU via hydrolysis of 10-formyl-tetrahydrofolate. This Prochlorococcus marinus (strain AS9601) protein is Formate-dependent phosphoribosylglycinamide formyltransferase.